We begin with the raw amino-acid sequence, 188 residues long: Elongation factor P (188 aa).

Belongs to the elongation factor P family.

It is found in the cytoplasm. The protein operates within protein biosynthesis; polypeptide chain elongation. Involved in peptide bond synthesis. Stimulates efficient translation and peptide-bond synthesis on native or reconstituted 70S ribosomes in vitro. Probably functions indirectly by altering the affinity of the ribosome for aminoacyl-tRNA, thus increasing their reactivity as acceptors for peptidyl transferase. This is Elongation factor P from Bradyrhizobium sp. (strain BTAi1 / ATCC BAA-1182).